The sequence spans 461 residues: Fumarate hydratase class II (461 aa).

Substrate is bound by residues 98–100 (SGT), 129–132 (HPND), 139–141 (SSN), and threonine 187. Residues 120-140 (SKKGGKSPVHPNDHVNKGQSS) form a disordered region. Histidine 188 (proton donor/acceptor) is an active-site residue. Serine 318 is an active-site residue. Substrate contacts are provided by residues serine 319 and 324 to 326 (KVN).

Belongs to the class-II fumarase/aspartase family. Fumarase subfamily. As to quaternary structure, homotetramer.

The protein localises to the cytoplasm. It carries out the reaction (S)-malate = fumarate + H2O. Its pathway is carbohydrate metabolism; tricarboxylic acid cycle; (S)-malate from fumarate: step 1/1. Functionally, involved in the TCA cycle. Catalyzes the stereospecific interconversion of fumarate to L-malate. This chain is Fumarate hydratase class II, found in Rickettsia felis (strain ATCC VR-1525 / URRWXCal2) (Rickettsia azadi).